A 512-amino-acid polypeptide reads, in one-letter code: Ferredoxin--nitrite reductase (512 aa).

Positions 396, 402, 437, and 441 each coordinate [4Fe-4S] cluster. Cys441 contributes to the siroheme binding site.

This sequence belongs to the nitrite and sulfite reductase 4Fe-4S domain family.

It carries out the reaction 6 oxidized [2Fe-2S]-[ferredoxin] + NH4(+) + 2 H2O = nitrite + 6 reduced [2Fe-2S]-[ferredoxin] + 8 H(+). The polypeptide is Ferredoxin--nitrite reductase (nirA) (Synechococcus elongatus (strain ATCC 33912 / PCC 7942 / FACHB-805) (Anacystis nidulans R2)).